A 300-amino-acid chain; its full sequence is CDP-diacylglycerol--serine O-phosphatidyltransferase (300 aa).

The next 6 membrane-spanning stretches (helical) occupy residues 10–30 (AVNLQILPSSMTVLSICAGLT), 74–94 (IDSLADAVNFGVAPAVVLYAT), 95–115 (MLSTTPVGWVAVLLYPVCVVL), 135–155 (EFFVGMPAPAGAVSVIGLLAL), 162–182 (GWWTSTWFLCIWVTGTSMLLI), and 207–227 (LAIFAAAVVLAPYLLIWVIIL).

Belongs to the CDP-alcohol phosphatidyltransferase class-I family.

Its subcellular location is the cell membrane. It catalyses the reaction a CDP-1,2-diacyl-sn-glycerol + L-serine = a 1,2-diacyl-sn-glycero-3-phospho-L-serine + CMP + H(+). The chain is CDP-diacylglycerol--serine O-phosphatidyltransferase (pssA) from Mycobacterium leprae (strain TN).